We begin with the raw amino-acid sequence, 245 residues long: Ubiquinone/menaquinone biosynthesis C-methyltransferase UbiE (245 aa).

Residues Thr71, Asp92, and 118–119 (DA) each bind S-adenosyl-L-methionine.

Belongs to the class I-like SAM-binding methyltransferase superfamily. MenG/UbiE family.

The catalysed reaction is a 2-demethylmenaquinol + S-adenosyl-L-methionine = a menaquinol + S-adenosyl-L-homocysteine + H(+). It carries out the reaction a 2-methoxy-6-(all-trans-polyprenyl)benzene-1,4-diol + S-adenosyl-L-methionine = a 5-methoxy-2-methyl-3-(all-trans-polyprenyl)benzene-1,4-diol + S-adenosyl-L-homocysteine + H(+). It participates in quinol/quinone metabolism; menaquinone biosynthesis; menaquinol from 1,4-dihydroxy-2-naphthoate: step 2/2. It functions in the pathway cofactor biosynthesis; ubiquinone biosynthesis. Its function is as follows. Methyltransferase required for the conversion of demethylmenaquinol (DMKH2) to menaquinol (MKH2) and the conversion of 2-polyprenyl-6-methoxy-1,4-benzoquinol (DDMQH2) to 2-polyprenyl-3-methyl-6-methoxy-1,4-benzoquinol (DMQH2). This chain is Ubiquinone/menaquinone biosynthesis C-methyltransferase UbiE, found in Neisseria meningitidis serogroup C (strain 053442).